Consider the following 259-residue polypeptide: MIKDTQSTAENQANETTHFGFKTVAKEEKQQLVANVFHSVAAKYDLMNDLLSFGIHRIWKRFTIDCSGVRKGQKVLDLAGGTGDFSAKFSRIVGETGQVVLADINSSMLEVGRDKLRNLGVVGNINYVQANAEHLPFADNTFDCVVISFGLRNVTDKDKALKSMYRVLKPGGRLLVLEFSKPIFDPISQLYNFYSFNILPKVGGIVVNDAESYRYLAESIRMHPKQDELKTMMEHAGFESVNYYNLSAGIVALHRGYKF.

S-adenosyl-L-methionine-binding positions include threonine 82, aspartate 103, 131–132, and serine 148; that span reads NA.

Belongs to the class I-like SAM-binding methyltransferase superfamily. MenG/UbiE family.

It carries out the reaction a 2-demethylmenaquinol + S-adenosyl-L-methionine = a menaquinol + S-adenosyl-L-homocysteine + H(+). It catalyses the reaction a 2-methoxy-6-(all-trans-polyprenyl)benzene-1,4-diol + S-adenosyl-L-methionine = a 5-methoxy-2-methyl-3-(all-trans-polyprenyl)benzene-1,4-diol + S-adenosyl-L-homocysteine + H(+). It functions in the pathway quinol/quinone metabolism; menaquinone biosynthesis; menaquinol from 1,4-dihydroxy-2-naphthoate: step 2/2. The protein operates within cofactor biosynthesis; ubiquinone biosynthesis. Functionally, methyltransferase required for the conversion of demethylmenaquinol (DMKH2) to menaquinol (MKH2) and the conversion of 2-polyprenyl-6-methoxy-1,4-benzoquinol (DDMQH2) to 2-polyprenyl-3-methyl-6-methoxy-1,4-benzoquinol (DMQH2). The chain is Ubiquinone/menaquinone biosynthesis C-methyltransferase UbiE from Haemophilus ducreyi (strain 35000HP / ATCC 700724).